The chain runs to 143 residues: Large ribosomal subunit protein uL13 (143 aa).

This sequence belongs to the universal ribosomal protein uL13 family. As to quaternary structure, part of the 50S ribosomal subunit.

In terms of biological role, this protein is one of the early assembly proteins of the 50S ribosomal subunit, although it is not seen to bind rRNA by itself. It is important during the early stages of 50S assembly. This chain is Large ribosomal subunit protein uL13, found in Dehalococcoides mccartyi (strain ATCC BAA-2266 / KCTC 15142 / 195) (Dehalococcoides ethenogenes (strain 195)).